We begin with the raw amino-acid sequence, 156 residues long: Ribosomal RNA large subunit methyltransferase H (156 aa).

S-adenosyl-L-methionine contacts are provided by residues Leu73, Gly104, and 123–128 (LSPLTL).

Belongs to the RNA methyltransferase RlmH family. Homodimer.

The protein localises to the cytoplasm. The catalysed reaction is pseudouridine(1915) in 23S rRNA + S-adenosyl-L-methionine = N(3)-methylpseudouridine(1915) in 23S rRNA + S-adenosyl-L-homocysteine + H(+). In terms of biological role, specifically methylates the pseudouridine at position 1915 (m3Psi1915) in 23S rRNA. The protein is Ribosomal RNA large subunit methyltransferase H of Pectobacterium carotovorum subsp. carotovorum (strain PC1).